Reading from the N-terminus, the 464-residue chain is Na(+)/H(+) antiporter NhaA 1 (464 aa).

11 helical membrane passes run 41–61 (GGLILMMAALIALALANSPLA), 85–105 (LHHWVNDGLMALFFFVVGLEL), 121–141 (VLPIVAAIGGMVIPAICYMSL), 150–170 (GWGIPMATDIAFALGVIALLA), 180–200 (FLVALAIVDDLGAVVVIAVFY), 207–227 (SFLIAGALLTCLLIFFNMIGI), 234–254 (FFVGLILWFVFLKSGVHATLA), 329–349 (VAFFILPVFAIFNAGVTIDFG), 363–383 (VVFGLLFGKFVGITGASWLAI), 399–419 (IIGASMLGSIGFTMSIFIAEL), and 428–448 (IIQAKLGILLSSLVAGVAGYL).

Belongs to the NhaA Na(+)/H(+) (TC 2.A.33) antiporter family.

The protein resides in the cell inner membrane. The catalysed reaction is Na(+)(in) + 2 H(+)(out) = Na(+)(out) + 2 H(+)(in). Na(+)/H(+) antiporter that extrudes sodium in exchange for external protons. This is Na(+)/H(+) antiporter NhaA 1 from Saccharophagus degradans (strain 2-40 / ATCC 43961 / DSM 17024).